A 360-amino-acid polypeptide reads, in one-letter code: Uroporphyrinogen decarboxylase (360 aa).

Substrate-binding positions include 27–31 (RQSGR), Phe46, Asp77, Tyr154, Thr209, and His327.

It belongs to the uroporphyrinogen decarboxylase family. In terms of assembly, homodimer.

The protein localises to the cytoplasm. The catalysed reaction is uroporphyrinogen III + 4 H(+) = coproporphyrinogen III + 4 CO2. Its pathway is porphyrin-containing compound metabolism; protoporphyrin-IX biosynthesis; coproporphyrinogen-III from 5-aminolevulinate: step 4/4. Its function is as follows. Catalyzes the decarboxylation of four acetate groups of uroporphyrinogen-III to yield coproporphyrinogen-III. The polypeptide is Uroporphyrinogen decarboxylase (Wigglesworthia glossinidia brevipalpis).